A 381-amino-acid polypeptide reads, in one-letter code: tRNA pseudouridine synthase D (381 aa).

Aspartate 81 acts as the Nucleophile in catalysis. Residues 160-335 (GMPNYFGPQR…TLGSRRFFWV (176 aa)) enclose the TRUD domain.

The protein belongs to the pseudouridine synthase TruD family.

The catalysed reaction is uridine(13) in tRNA = pseudouridine(13) in tRNA. Responsible for synthesis of pseudouridine from uracil-13 in transfer RNAs. This Helicobacter pylori (strain Shi470) protein is tRNA pseudouridine synthase D.